The sequence spans 36 residues: Collagen alpha-2(I) chain (36 aa).

Residues 1-36 are disordered; it reads GSNGEPGSAGPPGPAGLRGLPGESGAVGPAGPPGSR. 4-hydroxyproline occurs at positions 6 and 12. Over residues 15-29 the composition is skewed to low complexity; sequence AGLRGLPGESGAVGP. Residue Pro33 is modified to 4-hydroxyproline.

It belongs to the fibrillar collagen family. In terms of assembly, trimers of one alpha 2(I) and two alpha 1(I) chains. In terms of processing, proline residues at the third position of the tripeptide repeating unit (G-X-Y) are hydroxylated in some or all of the chains.

The protein localises to the secreted. Its subcellular location is the extracellular space. It is found in the extracellular matrix. Its function is as follows. Type I collagen is a member of group I collagen (fibrillar forming collagen). The polypeptide is Collagen alpha-2(I) chain (Brachylophosaurus canadensis (Campanian hadrosaur)).